Consider the following 691-residue polypeptide: tRNA-dihydrouridine(47) synthase [NAD(P)(+)]-like (691 aa).

Ser-2 carries the post-translational modification N-acetylserine. Positions Pro-55 to Gln-94 are disordered. 2 C3H1-type zinc fingers span residues Gln-94–Glu-125 and Gln-138–Ile-163. The tract at residues Leu-259–Val-286 is disordered. Basic and acidic residues predominate over residues Glu-262–Lys-279. FMN-binding positions include Pro-344 to Thr-346 and Gln-398. The active-site Proton donor is Cys-429. FMN contacts are provided by residues Lys-468, His-498, Asn-531–Asp-533, and Ala-556–Arg-557.

The protein belongs to the Dus family. Dus3 subfamily. FMN is required as a cofactor.

The catalysed reaction is 5,6-dihydrouridine(47) in tRNA + NAD(+) = uridine(47) in tRNA + NADH + H(+). It carries out the reaction 5,6-dihydrouridine(47) in tRNA + NADP(+) = uridine(47) in tRNA + NADPH + H(+). It catalyses the reaction a 5,6-dihydrouridine in mRNA + NAD(+) = a uridine in mRNA + NADH + H(+). The enzyme catalyses a 5,6-dihydrouridine in mRNA + NADP(+) = a uridine in mRNA + NADPH + H(+). Catalyzes the synthesis of dihydrouridine, a modified base found in the D-loop of most tRNAs. Specifically modifies U47 in cytoplasmic tRNAs. Catalyzes the synthesis of dihydrouridine in some mRNAs, thereby affecting their translation. The protein is tRNA-dihydrouridine(47) synthase [NAD(P)(+)]-like of Arabidopsis thaliana (Mouse-ear cress).